The primary structure comprises 396 residues: Ribosomal RNA large subunit methyltransferase I (396 aa).

Residues 2-79 (SVFIYLVKGR…KEETVDLDFF (78 aa)) form the PUA domain.

This sequence belongs to the methyltransferase superfamily. RlmI family.

It localises to the cytoplasm. It carries out the reaction cytidine(1962) in 23S rRNA + S-adenosyl-L-methionine = 5-methylcytidine(1962) in 23S rRNA + S-adenosyl-L-homocysteine + H(+). Its function is as follows. Specifically methylates the cytosine at position 1962 (m5C1962) of 23S rRNA. The sequence is that of Ribosomal RNA large subunit methyltransferase I from Aeromonas salmonicida (strain A449).